A 318-amino-acid polypeptide reads, in one-letter code: Ribosomal RNA small subunit methyltransferase H (318 aa).

Residues 35–37 (GGH), D54, F83, D104, and Q111 contribute to the S-adenosyl-L-methionine site.

The protein belongs to the methyltransferase superfamily. RsmH family.

The protein resides in the cytoplasm. It carries out the reaction cytidine(1402) in 16S rRNA + S-adenosyl-L-methionine = N(4)-methylcytidine(1402) in 16S rRNA + S-adenosyl-L-homocysteine + H(+). Specifically methylates the N4 position of cytidine in position 1402 (C1402) of 16S rRNA. This Latilactobacillus sakei subsp. sakei (strain 23K) (Lactobacillus sakei subsp. sakei) protein is Ribosomal RNA small subunit methyltransferase H.